Reading from the N-terminus, the 206-residue chain is Isochorismatase domain-containing protein 2A (206 aa).

Residue K26 is modified to N6-succinyllysine. An N6-acetyllysine; alternate mark is found at K93 and K178. N6-succinyllysine; alternate occurs at positions 93 and 178. N6-acetyllysine occurs at positions 182 and 185.

Belongs to the isochorismatase family. In terms of assembly, interacts with CDKN2A. In terms of tissue distribution, ubiquitous. Expressed predominantly in uterus, stomach and urinary tract.

It is found in the cytoplasm. It localises to the nucleus. The protein is Isochorismatase domain-containing protein 2A of Mus musculus (Mouse).